The sequence spans 343 residues: Methylthioribose-1-phosphate isomerase (343 aa).

Residues 48–50 (RGA), Arg88, and Gln193 each bind substrate. Catalysis depends on Asp234, which acts as the Proton donor. 244–245 (NK) is a substrate binding site.

This sequence belongs to the eIF-2B alpha/beta/delta subunits family. MtnA subfamily.

The catalysed reaction is 5-(methylsulfanyl)-alpha-D-ribose 1-phosphate = 5-(methylsulfanyl)-D-ribulose 1-phosphate. The protein operates within amino-acid biosynthesis; L-methionine biosynthesis via salvage pathway; L-methionine from S-methyl-5-thio-alpha-D-ribose 1-phosphate: step 1/6. Its function is as follows. Catalyzes the interconversion of methylthioribose-1-phosphate (MTR-1-P) into methylthioribulose-1-phosphate (MTRu-1-P). This chain is Methylthioribose-1-phosphate isomerase, found in Thermotoga maritima (strain ATCC 43589 / DSM 3109 / JCM 10099 / NBRC 100826 / MSB8).